A 257-amino-acid chain; its full sequence is Ribosome maturation factor RimP (257 aa).

Positions 182 to 257 (LRRGGPPAAD…SRLKDRDSLH (76 aa)) are disordered. Residues 191 to 205 (DEADEAEEAEDEEVA) are compositionally biased toward acidic residues. Positions 224–236 (KASPAAKPQKQAR) are enriched in low complexity.

Belongs to the RimP family.

The protein resides in the cytoplasm. Functionally, required for maturation of 30S ribosomal subunits. The polypeptide is Ribosome maturation factor RimP (Methylobacterium radiotolerans (strain ATCC 27329 / DSM 1819 / JCM 2831 / NBRC 15690 / NCIMB 10815 / 0-1)).